The chain runs to 380 residues: Protein Wnt-5a (380 aa).

The signal sequence occupies residues 1–40 (MRKNLWTFQFGGEASGLVGSAMVSQHFVVLLMSLYCLTQS). A disulfide bond links cysteine 104 and cysteine 115. N-linked (GlcNAc...) asparagine glycans are attached at residues asparagine 114 and asparagine 120. 10 cysteine pairs are disulfide-bonded: cysteine 154–cysteine 162, cysteine 164–cysteine 182, cysteine 238–cysteine 252, cysteine 240–cysteine 247, cysteine 309–cysteine 340, cysteine 325–cysteine 335, cysteine 339–cysteine 379, cysteine 355–cysteine 370, cysteine 357–cysteine 367, and cysteine 362–cysteine 363. The O-palmitoleoyl serine; by PORCN moiety is linked to residue serine 244. N-linked (GlcNAc...) asparagine glycans are attached at residues asparagine 312 and asparagine 326.

This sequence belongs to the Wnt family. Post-translationally, palmitoleoylation is required for efficient binding to frizzled receptors. Depalmitoleoylation leads to Wnt signaling pathway inhibition. In terms of tissue distribution, found primarily in ectoderm with lower levels of expression in mesoderm. Detected in the head and tail with lower expression in the middle of the embryo. No expression was found in the notochord.

It localises to the secreted. The protein localises to the extracellular space. Its subcellular location is the extracellular matrix. Ligand for members of the frizzled family of seven transmembrane receptors. Can activate or inhibit canonical Wnt signaling, depending on receptor context. Plays a role in normal embryonic development. In Xenopus laevis (African clawed frog), this protein is Protein Wnt-5a (wnt5a).